The chain runs to 67 residues: Alpha-toxin Bu1 (67 aa).

In terms of domain architecture, LCN-type CS-alpha/beta spans 3–65 (RDAYIADDKN…VPIRIPGRCR (63 aa)). Cystine bridges form between cysteine 13–cysteine 64, cysteine 17–cysteine 37, cysteine 23–cysteine 47, and cysteine 27–cysteine 49. The residue at position 65 (arginine 65) is an Arginine amide.

It belongs to the long (4 C-C) scorpion toxin superfamily. Sodium channel inhibitor family. Alpha subfamily. Expressed by the venom gland.

It localises to the secreted. Alpha toxins bind voltage-independently at site-3 of sodium channels (Nav) and inhibit the inactivation of the activated channels, thereby blocking neuronal transmission. Since the experiments have been done on F11 cells (immortalized cell line derived from rat DRG neurons mainly expressing Nav1.3/SCN3A, but also Nav1.7/SCN9A and Nav1.2/SCN2A), it is supposed to act on these channels. The slow of inactivation process is partially reversible. Is lethal to mice. This is Alpha-toxin Bu1 from Buthacus macrocentrus (Turkish scorpion).